The chain runs to 88 residues: Large ribosomal subunit protein bL31B (88 aa).

Belongs to the bacterial ribosomal protein bL31 family. Type B subfamily. Part of the 50S ribosomal subunit.

The sequence is that of Large ribosomal subunit protein bL31B from Nocardia farcinica (strain IFM 10152).